The sequence spans 424 residues: Inhibin beta A chain (424 aa).

An N-terminal signal peptide occupies residues M1–S20. Residues S21–R308 constitute a propeptide that is removed on maturation. The N-linked (GlcNAc...) asparagine glycan is linked to N165. Disordered stretches follow at residues Q178 to F197 and K259 to R306. A compositionally biased stretch (acidic residues) spans A188 to F197. The span at K263–E275 shows a compositional bias: basic and acidic residues. 4 cysteine pairs are disulfide-bonded: C312–C320, C319–C389, C348–C421, and C352–C423.

The protein belongs to the TGF-beta family. Dimeric, linked by one or more disulfide bonds. Inhibin A is a dimer of alpha/INHA and beta-A/INHBA. Activin A is a homodimer of beta-A/INHBA. Activin AB is a dimer of beta-A/INHBA and beta-B/INHBB. Interacts with FST and FSTL3; these interactions prevent activin A interaction to its type II receptor. Activin A interacts with ACVR2A. Activin A interacts with BMPR2. Inhibin A interacts with ACVR1; this interaction creates a non-signaling complex (NSC) that inhibits ACVR1-mediated BMP signaling. Inhibin A interacts with ACVR2A.

The protein localises to the secreted. Its function is as follows. Inhibins/activins are involved in regulating a number of diverse functions such as hypothalamic and pituitary hormone secretion, gonadal hormone secretion, germ cell development and maturation, erythroid differentiation, insulin secretion, nerve cell survival, embryonic axial development or bone growth, depending on their subunit composition. Functionally, activin A is a homodimer of INHBA that plays a role in several essential biological processes including embryonic development, stem cell maintenance and differentiation, haematopoiesis, cell proliferation and tissue fibrosis. Signals through type I (such as ACVR1B or ACVR1C) and type II receptors (such as ACVR2A, ACVR2B or BMPR2) which, upon ligand binding, phosphorylate SMAD2 and SMAD3 intracellular signaling mediators that form a complex with SMAD4, translocate to the nucleus and modulate gene expression. Can also activate alternative non-canonical intracellular signaling pathways including the p38 MAPK, extracellular signal-regulated kinases 1/2 (ERK1/2) and c-Jun N-terminal kinases (JNKs) to modulate cell migration and differentiation. Alternatively, promotes osteoblastic differentiation via ACVRL1-SMAD1/5/9 pathway. In addition, can engage the type I receptor ACVR1 to form an ACVR1-activin A-type II receptor non-signaling complex (NSC) that renders receptors unavailable for engagement with BMPs, hence resulting in an apparent inhibition of ACVR1-mediated BMP signaling. Inhibin A is a dimer of alpha/INHA and beta-A/INHBA that functions as a feedback regulator in the hypothalamic-pituitary-gonadal (HPG) axis. Inhibits the secretion of FSH from the anterior pituitary gland by acting on pituitary gonadotrope cells. Antagonizes activin A by binding to the proteoglycan, betaglycan, and forming a stable complex with and, thereby, sequestering type II activin receptors while excluding type I receptor. The chain is Inhibin beta A chain (INHBA) from Sus scrofa (Pig).